We begin with the raw amino-acid sequence, 504 residues long: Maturase K (504 aa).

This sequence belongs to the intron maturase 2 family. MatK subfamily.

It is found in the plastid. It localises to the chloroplast. Functionally, usually encoded in the trnK tRNA gene intron. Probably assists in splicing its own and other chloroplast group II introns. This Hamamelis mollis (Chinese witch hazel) protein is Maturase K.